The chain runs to 402 residues: Type II NADH:quinone oxidoreductase (402 aa).

Residues 12–16 (GAGYA), 39–40 (NK), and Val-83 each bind FAD. Glu-172 is a catalytic residue. Residues Asp-302, 319-320 (AQ), and Lys-379 contribute to the FAD site.

This sequence belongs to the NADH dehydrogenase family. Requires FAD as cofactor.

The protein resides in the cell membrane. The catalysed reaction is a quinone + NADH + H(+) = a quinol + NAD(+). Its function is as follows. Alternative, nonproton pumping NADH:quinone oxidoreductase that delivers electrons to the respiratory chain by oxidation of NADH and reduction of quinones, and contributes to the regeneration of NAD(+). In Staphylococcus aureus (strain bovine RF122 / ET3-1), this protein is Type II NADH:quinone oxidoreductase.